Consider the following 134-residue polypeptide: Small ribosomal subunit protein uS8 (134 aa).

It belongs to the universal ribosomal protein uS8 family. Part of the 30S ribosomal subunit. Contacts proteins S5 and S12.

In terms of biological role, one of the primary rRNA binding proteins, it binds directly to 16S rRNA central domain where it helps coordinate assembly of the platform of the 30S subunit. This chain is Small ribosomal subunit protein uS8, found in Kosmotoga olearia (strain ATCC BAA-1733 / DSM 21960 / TBF 19.5.1).